A 1006-amino-acid chain; its full sequence is E3 ubiquitin-protein ligase MIB1 (1006 aa).

An MIB/HERC2 1 domain is found at 6–74 (NNRVMVEGVG…AYDLRILDSA (69 aa)). The ZZ-type zinc finger occupies 80–132 (HDGTMCDTCRQQPIIGIRWKCAECTNYDLCTVCYHGDKHHLRHRFYRITTPGS). Zn(2+)-binding residues include cysteine 85, cysteine 88, cysteine 100, cysteine 103, cysteine 109, cysteine 112, histidine 118, and histidine 122. Positions 143 to 221 (SKKITARGIF…MSDLKCVQDA (79 aa)) constitute an MIB/HERC2 2 domain. Residue serine 408 is modified to Phosphoserine. ANK repeat units lie at residues 430–460 (DLNEELVKAAANGDVAKVEDLLKRPDVDVNG), 463–492 (AGHTAMQAASQNGHVDILKLLLKQNVDVEA), 496–525 (DGDRAVHHAAFGDEGAVIEVLHRGSADLNA), 529–558 (RRQTPLHIAVNKGHLQVVKTLLDFGCHPSL), 562–591 (EGDTPLHDAISKKRDDILAVLLEAGADVTI), 595–627 (NGFNALHHAALRGNPSAMRVLLSKLPRPWIVDE), 631–661 (DGYTALHLAALNNHVEVAELLVHQGNANLDI), 665–694 (NQQTALHLAVERQHTQIVRLLVRAGAKLDI), and 698–729 (DGDTPLHEALRHHTLSQLRQLQDMQDVGKVDA). 2 consecutive RING-type zinc fingers follow at residues 819–854 (CMVCSDMKRDTLFGPCGHIATCSLCSPRVKKCLICK) and 866–901 (CVVCSDKKAAVLFQPCGHMCACENCASLMKKCVQCR). Residues 935–962 (QKDKDNTNVNADVQKLQQQLQDIKEQTM) adopt a coiled-coil conformation. An RING-type 3 zinc finger spans residues 963–996 (CPVCLDRLKNMIFLCGHGTCQLCGDRMSECPICR).

As to quaternary structure, interacts with CEP131 and PCM1. In terms of processing, ubiquitinated; this modification is inhibited in response to cellular stress, such as ultraviolet light (UV) radiation or heat shock. Ubiquitinated; possibly via autoubiquitination. Detected in all tissues tested. Present in embryo, embryonic stem cells, bladder, skeletal muscle, bladder, uterus, testis, stomach, colon, ileum, trachea, lung, aorta, kidney, spleen, liver and vas deferens (at protein level). Highly expressed in testis.

Its subcellular location is the cytoplasm. It localises to the cytoskeleton. The protein localises to the microtubule organizing center. The protein resides in the centrosome. It is found in the centriolar satellite. Its subcellular location is the cell membrane. The catalysed reaction is S-ubiquitinyl-[E2 ubiquitin-conjugating enzyme]-L-cysteine + [acceptor protein]-L-lysine = [E2 ubiquitin-conjugating enzyme]-L-cysteine + N(6)-ubiquitinyl-[acceptor protein]-L-lysine.. The protein operates within protein modification; protein ubiquitination. Functionally, E3 ubiquitin-protein ligase that mediates ubiquitination of Delta receptors, which act as ligands of Notch proteins. Positively regulates the Delta-mediated Notch signaling by ubiquitinating the intracellular domain of Delta, leading to endocytosis of Delta receptors. Involved in ubiquitination of centriolar satellite CEP131, CEP290 and PCM1 proteins and hence inhibits primary cilium formation in proliferating cells. Mediates 'Lys-63'-linked polyubiquitination of TBK1, which probably participates in kinase activation. Probably mediates ubiquitination and subsequent proteasomal degradation of DAPK1, thereby antagonizing anti-apoptotic effects of DAPK1 to promote TNF-induced apoptosis. This is E3 ubiquitin-protein ligase MIB1 (Mib1) from Mus musculus (Mouse).